The following is a 244-amino-acid chain: Small ribosomal subunit protein uS2 (244 aa).

It belongs to the universal ribosomal protein uS2 family.

This chain is Small ribosomal subunit protein uS2, found in Psychromonas ingrahamii (strain DSM 17664 / CCUG 51855 / 37).